We begin with the raw amino-acid sequence, 108 residues long: Translation initiation factor 1A (108 aa).

The S1-like domain maps to 11–85 (PSRDVPKPEE…NRCDILYKYG (75 aa)).

The protein belongs to the eIF-1A family.

Its function is as follows. Seems to be required for maximal rate of protein biosynthesis. Enhances ribosome dissociation into subunits and stabilizes the binding of the initiator Met-tRNA(I) to 40 S ribosomal subunits. This chain is Translation initiation factor 1A (eIF1A), found in Saccharolobus islandicus (strain Y.N.15.51 / Yellowstone #2) (Sulfolobus islandicus).